The sequence spans 106 residues: Apovitellenin-1 (106 aa).

An N-terminal signal peptide occupies residues 1-24 (MVQYRALVIAVILLLSTTVPEVHS).

It belongs to the apovitellenin family. As to quaternary structure, homodimer; disulfide-linked. Produced by the liver, secreted into the blood and then sequestred by receptor mediated endocytosis into growing oocytes.

Its function is as follows. Protein component of the very low density lipoprotein (VLDL) of egg-laying females. Potent lipoprotein lipase inhibitor, preventing the loss of triglycerides from VLDL on their way from the liver to the growing oocytes. The protein is Apovitellenin-1 of Gallus gallus (Chicken).